The sequence spans 157 residues: Cyclic pyranopterin monophosphate synthase (157 aa).

Residues 74–76 (MCH) and 112–113 (ME) each bind substrate. Asp-127 is an active-site residue.

It belongs to the MoaC family. As to quaternary structure, homohexamer; trimer of dimers.

The enzyme catalyses (8S)-3',8-cyclo-7,8-dihydroguanosine 5'-triphosphate = cyclic pyranopterin phosphate + diphosphate. It participates in cofactor biosynthesis; molybdopterin biosynthesis. Its function is as follows. Catalyzes the conversion of (8S)-3',8-cyclo-7,8-dihydroguanosine 5'-triphosphate to cyclic pyranopterin monophosphate (cPMP). This is Cyclic pyranopterin monophosphate synthase from Campylobacter lari (strain RM2100 / D67 / ATCC BAA-1060).